A 550-amino-acid polypeptide reads, in one-letter code: Arginine--tRNA ligase (550 aa).

The 'HIGH' region motif lies at 130 to 140; that stretch reads ANPTGPIHIGG.

Belongs to the class-I aminoacyl-tRNA synthetase family. In terms of assembly, monomer.

The protein resides in the cytoplasm. The catalysed reaction is tRNA(Arg) + L-arginine + ATP = L-arginyl-tRNA(Arg) + AMP + diphosphate. The chain is Arginine--tRNA ligase from Mycobacterium marinum (strain ATCC BAA-535 / M).